Here is a 145-residue protein sequence, read N- to C-terminus: Probable DNA-directed RNA polymerases I and III subunit RPAC2 (145 aa).

The tract at residues 1-52 is disordered; that stretch reads MGKKSEKKVVEETMEVDEQPAVEPEAVPEEEPEVEDEDLNVPKKKKMEILDP. Residues 12-39 are compositionally biased toward acidic residues; it reads ETMEVDEQPAVEPEAVPEEEPEVEDEDL.

The protein belongs to the archaeal Rpo11/eukaryotic RPB11/RPC19 RNA polymerase subunit family. As to quaternary structure, component of the RNA polymerase I (Pol I) and RNA polymerase III (Pol III) complexes consisting of at least 13 and 17 subunits, respectively.

The protein localises to the nucleus. Functionally, DNA-dependent RNA polymerase catalyzes the transcription of DNA into RNA using the four ribonucleoside triphosphates as substrates. Common core component of RNA polymerases I and III which synthesize ribosomal RNA precursors and small RNAs, such as 5S rRNA and tRNAs, respectively. The sequence is that of Probable DNA-directed RNA polymerases I and III subunit RPAC2 (rpac-19) from Caenorhabditis briggsae.